We begin with the raw amino-acid sequence, 336 residues long: MDEIQDIEGLTRRALQAISRIDTLRDLTKLKNDNLGSTSWLAKYSASIKILSQEKKPIIGKAVSEARRKILEACQDRDLALRLNAQNEQFTRETLDITALPTRIFPGARHPIHVLQDKILDFFLMRGWSVVEGPELESEWLNFDALNIGPFHPAREESDTIFAEPRSASMLLRTHTSPVQLRALVSNPLPLYCVSSGKVFRSDPLDATHTPVFHQLEGLVCDRNITLGHLKGTVEDLARYLFGAEVNLRMRCNYFPFTEPSAEFDISRDGIDWTEWGGCGLVNSKVLSMAGVDTVHYTGFAFGFGLERTLQFIHSLSDMRDIVEGDIRFSQQFGLK.

Glu-259 is a binding site for Mg(2+).

Belongs to the class-II aminoacyl-tRNA synthetase family. Phe-tRNA synthetase alpha subunit type 1 subfamily. In terms of assembly, tetramer of two alpha and two beta subunits. It depends on Mg(2+) as a cofactor.

It is found in the cytoplasm. It catalyses the reaction tRNA(Phe) + L-phenylalanine + ATP = L-phenylalanyl-tRNA(Phe) + AMP + diphosphate + H(+). The sequence is that of Phenylalanine--tRNA ligase alpha subunit from Tropheryma whipplei (strain TW08/27) (Whipple's bacillus).